The chain runs to 743 residues: Alpha-N-acetylglucosaminidase (743 aa).

The N-terminal stretch at 1-23 (MEAVAVAAAVGVLLLAGAGGAAG) is a signal peptide. N-linked (GlcNAc...) asparagine glycosylation is found at Asn261, Asn272, Asn435, Asn503, Asn526, and Asn532.

It belongs to the glycosyl hydrolase 89 family. Monomer and homodimer. Liver, ovary, peripheral blood leukocytes, testis, prostate, spleen, colon, lung, placenta and kidney.

It is found in the lysosome. It carries out the reaction Hydrolysis of terminal non-reducing N-acetyl-D-glucosamine residues in N-acetyl-alpha-D-glucosaminides.. Functionally, involved in the degradation of heparan sulfate. The sequence is that of Alpha-N-acetylglucosaminidase (NAGLU) from Homo sapiens (Human).